Consider the following 89-residue polypeptide: Small ribosomal subunit protein uS15 (89 aa).

It belongs to the universal ribosomal protein uS15 family. In terms of assembly, part of the 30S ribosomal subunit. Forms a bridge to the 50S subunit in the 70S ribosome, contacting the 23S rRNA.

One of the primary rRNA binding proteins, it binds directly to 16S rRNA where it helps nucleate assembly of the platform of the 30S subunit by binding and bridging several RNA helices of the 16S rRNA. Its function is as follows. Forms an intersubunit bridge (bridge B4) with the 23S rRNA of the 50S subunit in the ribosome. This is Small ribosomal subunit protein uS15 from Lactobacillus gasseri (strain ATCC 33323 / DSM 20243 / BCRC 14619 / CIP 102991 / JCM 1131 / KCTC 3163 / NCIMB 11718 / NCTC 13722 / AM63).